A 73-amino-acid polypeptide reads, in one-letter code: Translation initiation factor IF-1 (73 aa).

Positions 1 to 73 (MSKKKDVIEM…TRGRITYRYK (73 aa)) constitute an S1-like domain.

Belongs to the IF-1 family. Component of the 30S ribosomal translation pre-initiation complex which assembles on the 30S ribosome in the order IF-2 and IF-3, IF-1 and N-formylmethionyl-tRNA(fMet); mRNA recruitment can occur at any time during PIC assembly.

The protein localises to the cytoplasm. In terms of biological role, one of the essential components for the initiation of protein synthesis. Stabilizes the binding of IF-2 and IF-3 on the 30S subunit to which N-formylmethionyl-tRNA(fMet) subsequently binds. Helps modulate mRNA selection, yielding the 30S pre-initiation complex (PIC). Upon addition of the 50S ribosomal subunit IF-1, IF-2 and IF-3 are released leaving the mature 70S translation initiation complex. The protein is Translation initiation factor IF-1 of Chloroflexus aurantiacus (strain ATCC 29366 / DSM 635 / J-10-fl).